Reading from the N-terminus, the 298-residue chain is Acetylglutamate kinase (298 aa).

Residues 66 to 67, Arg88, and Asn193 each bind substrate; that span reads GG.

This sequence belongs to the acetylglutamate kinase family. ArgB subfamily.

The protein localises to the cytoplasm. The catalysed reaction is N-acetyl-L-glutamate + ATP = N-acetyl-L-glutamyl 5-phosphate + ADP. Its pathway is amino-acid biosynthesis; L-arginine biosynthesis; N(2)-acetyl-L-ornithine from L-glutamate: step 2/4. In terms of biological role, catalyzes the ATP-dependent phosphorylation of N-acetyl-L-glutamate. This Methanosphaera stadtmanae (strain ATCC 43021 / DSM 3091 / JCM 11832 / MCB-3) protein is Acetylglutamate kinase.